Consider the following 344-residue polypeptide: Follistatin (344 aa).

Positions 1–29 (MARPRHQPGGLCLLLLLLCQFMEDRSAQA) are cleaved as a signal peptide. Residues 30–103 (GNCWLRQAKN…TCENVDCGPG (74 aa)) form the TB domain. 8 disulfide bridges follow: C32/C55, C42/C88, C56/C91, C95/C106, C100/C116, C118/C150, C122/C143, and C132/C164. Positions 94 to 117 (TCENVDCGPGKKCRMNKKNKPRCV) constitute a Follistatin-like 1 domain. Kazal-like domains follow at residues 112–166 (NKPR…KCKK), 186–241 (NAYC…KCIK), and 261–318 (KVGR…SCNS). N-linked (GlcNAc...) asparagine glycosylation occurs at N124. The region spanning 167–190 (TCRDVFCPGSSTCVVDQTNNAYCV) is the Follistatin-like 2 domain. 3 disulfide bridges follow: C192/C225, C196/C218, and C207/C239. The 25-residue stretch at 244–268 (SCDDIQCTGGKKCLWDFKVGRGRCS) folds into the Follistatin-like 3 domain. Intrachain disulfides connect C270/C302, C274/C295, and C284/C316. N-linked (GlcNAc...) asparagine glycosylation occurs at N288. Residues 316–344 (CNSISEDTEDEEEDEDQDYSFPISSILEW) form a disordered region. Residues 321-333 (EDTEDEEEDEDQD) are compositionally biased toward acidic residues.

As to quaternary structure, interacts with GDF11. Interacts with activin A/INHBA. Interacts with myostatin/MSTN.

It localises to the secreted. It is found in the nucleus. Its subcellular location is the nucleolus. Functionally, multifunctional regulatory protein whose primary function is to antagonize members of the transforming growth factor beta (TGF-beta) superfamily including activin, myostatin, GDF11 or bone morphogenetic proteins (BMPs). Mechanistically, binds to these ligands in the extracellular space, blocking their type II receptor-binding site to inhibit downstream signaling. Plays an essential role in muscle fiber formation and growth both by preventing the repressive effects of myostatin and through SMAD3/AKT/mTOR signaling independently of myostatin. Also promotes neural differentiation by antagonizing the action BMP4. Acts as a specific inhibitor of the biosynthesis and secretion of pituitary follicle stimulating hormone (FSH) by sequestering activin A/INHBA. On the other hand, translocates into the nucleus where it down-regulates rRNA synthesis and ribosome biogenesis to maintain cellular energy homeostasis by binding to rDNA. The sequence is that of Follistatin from Bos taurus (Bovine).